We begin with the raw amino-acid sequence, 198 residues long: MIEFVYPHTHLVAGVDEVGRGPLVGAVVTAAVILDPARPIVGLNDSKKLSEKRRLALYDEIKEKALSWSLGRAEPHEIDELNILHATMLAMQRAVAGLHIAPEYVLIDGNRCPALPVPSMAVVKGDSRVAEISAASILAKVTRDAEMAALDIIFPQYGFAQHKGYPTAFHLEKLAQYGATAHHRRSFAPVKRALELAS.

The region spanning 10–198 is the RNase H type-2 domain; that stretch reads HLVAGVDEVG…PVKRALELAS (189 aa). 3 residues coordinate a divalent metal cation: Asp16, Glu17, and Asp108.

It belongs to the RNase HII family. Requires Mn(2+) as cofactor. The cofactor is Mg(2+).

It localises to the cytoplasm. It carries out the reaction Endonucleolytic cleavage to 5'-phosphomonoester.. Its function is as follows. Endonuclease that specifically degrades the RNA of RNA-DNA hybrids. This Salmonella arizonae (strain ATCC BAA-731 / CDC346-86 / RSK2980) protein is Ribonuclease HII.